Here is a 259-residue protein sequence, read N- to C-terminus: Probable transcriptional regulatory protein Noca_2383 (259 aa).

The protein belongs to the TACO1 family.

The protein resides in the cytoplasm. The chain is Probable transcriptional regulatory protein Noca_2383 from Nocardioides sp. (strain ATCC BAA-499 / JS614).